The sequence spans 35 residues: Photosystem II reaction center protein T (35 aa).

Residues 3–23 (ALVYTFLLVGTLGIIFFAIFF) form a helical membrane-spanning segment.

This sequence belongs to the PsbT family. As to quaternary structure, PSII is composed of 1 copy each of membrane proteins PsbA, PsbB, PsbC, PsbD, PsbE, PsbF, PsbH, PsbI, PsbJ, PsbK, PsbL, PsbM, PsbT, PsbY, PsbZ, Psb30/Ycf12, at least 3 peripheral proteins of the oxygen-evolving complex and a large number of cofactors. It forms dimeric complexes.

Its subcellular location is the plastid. The protein localises to the chloroplast thylakoid membrane. Found at the monomer-monomer interface of the photosystem II (PS II) dimer, plays a role in assembly and dimerization of PSII. PSII is a light-driven water plastoquinone oxidoreductase, using light energy to abstract electrons from H(2)O, generating a proton gradient subsequently used for ATP formation. The protein is Photosystem II reaction center protein T of Marchantia polymorpha (Common liverwort).